Reading from the N-terminus, the 236-residue chain is Alanyl-tRNA editing protein AlaX-M (236 aa).

Positions 101, 105, and 205 each coordinate Zn(2+).

Belongs to the class-II aminoacyl-tRNA synthetase family. Editing domain AlaX-M subfamily. The cofactor is Zn(2+).

Its subcellular location is the cytoplasm. Its function is as follows. Functions in trans to edit the amino acid moiety from incorrectly charged Ser-tRNA(Ala). This is Alanyl-tRNA editing protein AlaX-M (alaXM) from Saccharolobus solfataricus (strain ATCC 35092 / DSM 1617 / JCM 11322 / P2) (Sulfolobus solfataricus).